A 1162-amino-acid polypeptide reads, in one-letter code: Nucleoporin nup132 (1162 aa).

Belongs to the nucleoporin Nup133 family. In terms of assembly, component of the npc107-120 complex which consists of nup85, nup107, nup120, nup131, nup132 and seh1. Interacts with nup107.

The protein localises to the nucleus envelope. In terms of biological role, functions as a component of the nuclear pore complex (NPC). NPC components, collectively referred to as nucleoporins (NUPs), can play the role of both NPC structural components and of docking or interaction partners for transiently associated nuclear transport factors. Active directional transport is assured by both, a Phe-Gly (FG) repeat affinity gradient for these transport factors across the NPC and a transport cofactor concentration gradient across the nuclear envelope. This Schizosaccharomyces pombe (strain 972 / ATCC 24843) (Fission yeast) protein is Nucleoporin nup132 (nup132).